A 117-amino-acid chain; its full sequence is Immunoglobulin heavy variable 3-7 (117 aa).

The first 19 residues, 1–19, serve as a signal peptide directing secretion; sequence MELGLSWVFLVAILEGVQC. The segment at 20–44 is framework-1; it reads EVQLVESGGGLVQPGGSLRLSCAAS. The Ig-like domain maps to 20–117; it reads EVQLVESGGG…EDTAVYYCAR (98 aa). An intrachain disulfide couples Cys41 to Cys115. The complementarity-determining-1 stretch occupies residues 45-52; the sequence is GFTFSSYW. Residues 53–69 are framework-2; the sequence is MSWVRQAPGKGLEWVAN. The segment at 70–77 is complementarity-determining-2; sequence IKQDGSEK. The tract at residues 78–115 is framework-3; it reads YYVDSVKGRFTISRDNAKNSLYLQMNSLRAEDTAVYYC. Residues 116–117 are complementarity-determining-3; the sequence is AR.

As to quaternary structure, immunoglobulins are composed of two identical heavy chains and two identical light chains; disulfide-linked.

It is found in the secreted. It localises to the cell membrane. Functionally, v region of the variable domain of immunoglobulin heavy chains that participates in the antigen recognition. Immunoglobulins, also known as antibodies, are membrane-bound or secreted glycoproteins produced by B lymphocytes. In the recognition phase of humoral immunity, the membrane-bound immunoglobulins serve as receptors which, upon binding of a specific antigen, trigger the clonal expansion and differentiation of B lymphocytes into immunoglobulins-secreting plasma cells. Secreted immunoglobulins mediate the effector phase of humoral immunity, which results in the elimination of bound antigens. The antigen binding site is formed by the variable domain of one heavy chain, together with that of its associated light chain. Thus, each immunoglobulin has two antigen binding sites with remarkable affinity for a particular antigen. The variable domains are assembled by a process called V-(D)-J rearrangement and can then be subjected to somatic hypermutations which, after exposure to antigen and selection, allow affinity maturation for a particular antigen. This chain is Immunoglobulin heavy variable 3-7, found in Homo sapiens (Human).